Reading from the N-terminus, the 183-residue chain is ATP-dependent protease subunit HslV (183 aa).

Residue threonine 12 is part of the active site. Residues alanine 166, cysteine 169, and threonine 172 each contribute to the Na(+) site.

Belongs to the peptidase T1B family. HslV subfamily. A double ring-shaped homohexamer of HslV is capped on each side by a ring-shaped HslU homohexamer. The assembly of the HslU/HslV complex is dependent on binding of ATP.

Its subcellular location is the cytoplasm. It catalyses the reaction ATP-dependent cleavage of peptide bonds with broad specificity.. Its activity is regulated as follows. Allosterically activated by HslU binding. In terms of biological role, protease subunit of a proteasome-like degradation complex believed to be a general protein degrading machinery. The sequence is that of ATP-dependent protease subunit HslV from Afipia carboxidovorans (strain ATCC 49405 / DSM 1227 / KCTC 32145 / OM5) (Oligotropha carboxidovorans).